Here is a 328-residue protein sequence, read N- to C-terminus: Malate dehydrogenase (328 aa).

12 to 18 is an NAD(+) binding site; that stretch reads GAAGQIG. Residues Arg93 and Arg99 each coordinate substrate. NAD(+) contacts are provided by residues Asn106, Gln113, and 130-132; that span reads VGN. Substrate contacts are provided by Asn132 and Arg163. The active-site Proton acceptor is His188.

This sequence belongs to the LDH/MDH superfamily. MDH type 2 family.

The enzyme catalyses (S)-malate + NAD(+) = oxaloacetate + NADH + H(+). Its function is as follows. Catalyzes the reversible oxidation of malate to oxaloacetate. This Saccharopolyspora erythraea (strain ATCC 11635 / DSM 40517 / JCM 4748 / NBRC 13426 / NCIMB 8594 / NRRL 2338) protein is Malate dehydrogenase.